The chain runs to 51 residues: Large ribosomal subunit protein eL39 (51 aa).

The disordered stretch occupies residues 32-51 (KGSVKQHPKMRHWRRNTLKK). Over residues 33–51 (GSVKQHPKMRHWRRNTLKK) the composition is skewed to basic residues.

This sequence belongs to the eukaryotic ribosomal protein eL39 family.

In Methanococcus vannielii (strain ATCC 35089 / DSM 1224 / JCM 13029 / OCM 148 / SB), this protein is Large ribosomal subunit protein eL39.